We begin with the raw amino-acid sequence, 610 residues long: Glucoamylase ARB_02327-1 (610 aa).

Positions 1–18 (MRVTSLLWSSLVIPAAVG) are cleaved as a signal peptide. The propeptide occupies 19-24 (FQVRFK). N-linked (GlcNAc...) asparagine glycosylation is present at Asn-49. Trp-143 contributes to the substrate binding site. An N-linked (GlcNAc...) asparagine glycan is attached at Asn-194. Asp-199 acts as the Proton acceptor in catalysis. The active-site Proton donor is the Glu-202. Disulfide bonds link Cys-233/Cys-236, Cys-245/Cys-472, and Cys-285/Cys-293. A CBM20 domain is found at 504 to 610 (TALPTKNNVR…SGAIKRDTWR (107 aa)).

Belongs to the glycosyl hydrolase 15 family.

Its subcellular location is the secreted. The enzyme catalyses Hydrolysis of terminal (1-&gt;4)-linked alpha-D-glucose residues successively from non-reducing ends of the chains with release of beta-D-glucose.. The sequence is that of Glucoamylase ARB_02327-1 from Arthroderma benhamiae (strain ATCC MYA-4681 / CBS 112371) (Trichophyton mentagrophytes).